A 593-amino-acid chain; its full sequence is NADH-quinone oxidoreductase subunit C/D (593 aa).

The tract at residues 1-184 is NADH dehydrogenase I subunit C; sequence MTADNALYIP…DPYSLTLAKQ (184 aa). The tract at residues 208-593 is NADH dehydrogenase I subunit D; it reads DYMFLNLGPN…IDFVMADVDR (386 aa).

It in the N-terminal section; belongs to the complex I 30 kDa subunit family. In the C-terminal section; belongs to the complex I 49 kDa subunit family. In terms of assembly, NDH-1 is composed of 13 different subunits. Subunits NuoB, CD, E, F, and G constitute the peripheral sector of the complex.

The protein localises to the cell inner membrane. It catalyses the reaction a quinone + NADH + 5 H(+)(in) = a quinol + NAD(+) + 4 H(+)(out). Functionally, NDH-1 shuttles electrons from NADH, via FMN and iron-sulfur (Fe-S) centers, to quinones in the respiratory chain. The immediate electron acceptor for the enzyme in this species is believed to be ubiquinone. Couples the redox reaction to proton translocation (for every two electrons transferred, four hydrogen ions are translocated across the cytoplasmic membrane), and thus conserves the redox energy in a proton gradient. The protein is NADH-quinone oxidoreductase subunit C/D of Pseudomonas savastanoi pv. phaseolicola (strain 1448A / Race 6) (Pseudomonas syringae pv. phaseolicola (strain 1448A / Race 6)).